We begin with the raw amino-acid sequence, 304 residues long: Glycine--tRNA ligase alpha subunit (304 aa).

It belongs to the class-II aminoacyl-tRNA synthetase family. Tetramer of two alpha and two beta subunits.

It localises to the cytoplasm. The catalysed reaction is tRNA(Gly) + glycine + ATP = glycyl-tRNA(Gly) + AMP + diphosphate. The protein is Glycine--tRNA ligase alpha subunit of Actinobacillus pleuropneumoniae serotype 3 (strain JL03).